The sequence spans 333 residues: Cysteine protease (333 aa).

The first 18 residues, 1–18, serve as a signal peptide directing secretion; the sequence is MKFLLVAALCALVAIGSC. Positions 19–108 are cleaved as a propeptide — activation peptide; the sequence is KPTREEIKTF…MEAAKEPLIN (90 aa). A glycan (N-linked (GlcNAc...) asparagine) is linked at Asn93. 2 disulfide bridges follow: Cys134-Cys182 and Cys168-Cys214. Cys137 is a catalytic residue. Active-site residues include His281 and Asn301.

This sequence belongs to the peptidase C1 family. In terms of assembly, homodimer.

Its function is as follows. Cysteine protease. The polypeptide is Cysteine protease (Blomia tropicalis (Mite)).